Consider the following 480-residue polypeptide: Proline--tRNA ligase (480 aa).

Belongs to the class-II aminoacyl-tRNA synthetase family. ProS type 3 subfamily. In terms of assembly, homodimer.

Its subcellular location is the cytoplasm. It carries out the reaction tRNA(Pro) + L-proline + ATP = L-prolyl-tRNA(Pro) + AMP + diphosphate. Its function is as follows. Catalyzes the attachment of proline to tRNA(Pro) in a two-step reaction: proline is first activated by ATP to form Pro-AMP and then transferred to the acceptor end of tRNA(Pro). This Metallosphaera sedula (strain ATCC 51363 / DSM 5348 / JCM 9185 / NBRC 15509 / TH2) protein is Proline--tRNA ligase.